We begin with the raw amino-acid sequence, 292 residues long: Protein SETSIP (292 aa).

The span at 1-11 (MAPKRQSPLPL) shows a compositional bias: low complexity. 2 disordered regions span residues 1–43 (MAPK…EQQE) and 158–292 (LNES…GEDD). Positions 35-78 (KKGEKEQQEAIEHIDEVQNEIDRLNEQDSEEILKVEQKYNKLRQ) form a coiled coil. The segment covering 237 to 292 (DMDDEEGGEDDDDDDDDGDEGEEELEDIDEGDEDEGEEDEDDDEGEEGEEDEGEDD) has biased composition (acidic residues).

This sequence belongs to the nucleosome assembly protein (NAP) family. As to expression, expressed in endothelial cell (EC) and protein-induced pluripotent stem (PiPS) endothelial cell (EC) (at protein level).

Its subcellular location is the cytoplasm. It is found in the nucleus. In terms of biological role, plays a role as a transcriptional activator involved in the early stage of somatic cell reprogramming. Promotes the differentiation of protein-induced pluripotent stem (PiPS) cells into endothelial cells and the formation of vascular-like tubes (in vitro). Involved in the transcription induction of vascular endothelial-cadherin (VE-cadherin) expression. Associates to the VE-cadherin gene promoter. The sequence is that of Protein SETSIP (SETSIP) from Homo sapiens (Human).